The sequence spans 456 residues: MNYPAEPFRIKSVETVSMIPRDERLKKMQEAGYNTFLLNSKDIYIDLLTDSGTNAMSDKQWAGMMMGDEAYAGSENFYHLERTVQELFGFKHIVPTHQGRGAENLLSQLAIKPGQYVAGNMYFTTTRYHQEKNGAVFVDIVRDEAHDAGLNIAFKGDIDLKKLQKLIDEKGAENIAYICLAVTVNLAGGQPVSMANMRAVRELTEAHGIKVFYDATRCVENAYFIKEQEQGFENKSIAEIVHEMFSYADGCTMSGKKDCLVNIGGFLCMNDDEMFSSAKELVVVYEGMPSYGGLAGRDMEAMAIGLREAMQYEYIEHRVKQVRYLGDKLKAAGVPIVEPVGGHAVFLDARRFCEHLTQDEFPAQSLAASIYVETGVRSMERGIISAGRNNVTGEHHRPKLETVRLTIPRRVYTYAHMDVVADGIIKLYQHKEDIRGLKFIYEPKQLRFFTARFDYI.

Position 257 is an N6-(pyridoxal phosphate)lysine (K257).

It belongs to the beta-eliminating lyase family. As to quaternary structure, homotetramer. It depends on pyridoxal 5'-phosphate as a cofactor.

The enzyme catalyses L-tyrosine + H2O = phenol + pyruvate + NH4(+). This Citrobacter freundii protein is Tyrosine phenol-lyase (tpl).